We begin with the raw amino-acid sequence, 305 residues long: Nucleotide-binding protein Rxyl_2009 (305 aa).

ATP is bound at residue 24–31; it reads GLSGAGKS. GTP is bound at residue 75-78; the sequence is DIRG.

It belongs to the RapZ-like family.

Functionally, displays ATPase and GTPase activities. The sequence is that of Nucleotide-binding protein Rxyl_2009 from Rubrobacter xylanophilus (strain DSM 9941 / JCM 11954 / NBRC 16129 / PRD-1).